The primary structure comprises 388 residues: Processive diacylglycerol beta-glucosyltransferase (388 aa).

Belongs to the glycosyltransferase 28 family. UgtP subfamily.

The protein localises to the cell membrane. It carries out the reaction a 1,2-diacyl-3-O-(beta-D-glucopyranosyl)-sn-glycerol + UDP-alpha-D-glucose = a 1,2-diacyl-3-O-(beta-D-Glc-(1-&gt;6)-beta-D-Glc)-sn-glycerol + UDP + H(+). The enzyme catalyses a 1,2-diacyl-3-O-(beta-D-Glc-(1-&gt;6)-beta-D-Glc)-sn-glycerol + UDP-alpha-D-glucose = a 1,2-diacyl-3-O-(beta-D-Glc-(1-&gt;6)-beta-D-Glc-(1-&gt;6)-beta-D-Glc)-sn-glycerol + UDP + H(+). It catalyses the reaction a 1,2-diacyl-sn-glycerol + UDP-alpha-D-glucose = a 1,2-diacyl-3-O-(beta-D-glucopyranosyl)-sn-glycerol + UDP + H(+). Its pathway is glycolipid metabolism; diglucosyl-diacylglycerol biosynthesis. In terms of biological role, processive glucosyltransferase involved in the biosynthesis of both the bilayer- and non-bilayer-forming membrane glucolipids. Is able to successively transfer up to three glucosyl residues to diacylglycerol (DAG), thereby catalyzing the formation of beta-monoglucosyl-DAG (3-O-(beta-D-glucopyranosyl)-1,2-diacyl-sn-glycerol), beta-diglucosyl-DAG (3-O-(beta-D-glucopyranosyl-beta-(1-&gt;6)-D-glucopyranosyl)-1,2-diacyl-sn-glycerol) and beta-triglucosyl-DAG (3-O-(beta-D-glucopyranosyl-beta-(1-&gt;6)-D-glucopyranosyl-beta-(1-&gt;6)-D-glucopyranosyl)-1,2-diacyl-sn-glycerol). Beta-diglucosyl-DAG is the predominant glycolipid found in Bacillales and is also used as a membrane anchor for lipoteichoic acid (LTA). The chain is Processive diacylglycerol beta-glucosyltransferase from Bacillus cereus (strain ATCC 10987 / NRS 248).